We begin with the raw amino-acid sequence, 192 residues long: uncharacterized protein (192 aa).

The next 6 membrane-spanning stretches (helical) occupy residues 5-22, 42-61, 66-88, 101-118, 122-139, and 159-181; these read VPPLFFVCALFFAEGIGL, FLFLGGILITGNWVCIHYVY, LRFLTPLGVGASAFCLSTCSGKL, WGLLYALVFYITYTALNL, LVMWGVSCVGFLCFSTIL, and ALLLASMGFIALSLYGTDELWLF.

It localises to the cell membrane. This is an uncharacterized protein from Treponema pallidum (strain Nichols).